A 396-amino-acid polypeptide reads, in one-letter code: Ribosomal RNA large subunit methyltransferase I (396 aa).

Residues 2 to 81 form the PUA domain; that stretch reads SVRLVLAKGR…ESIDIAFFTR (80 aa).

Belongs to the methyltransferase superfamily. RlmI family.

The protein localises to the cytoplasm. The catalysed reaction is cytidine(1962) in 23S rRNA + S-adenosyl-L-methionine = 5-methylcytidine(1962) in 23S rRNA + S-adenosyl-L-homocysteine + H(+). In terms of biological role, specifically methylates the cytosine at position 1962 (m5C1962) of 23S rRNA. The polypeptide is Ribosomal RNA large subunit methyltransferase I (Escherichia coli O127:H6 (strain E2348/69 / EPEC)).